The following is a 1530-amino-acid chain: B-cell CLL/lymphoma 9-like protein (1530 aa).

Disordered regions lie at residues 1–101 (MHSE…VLEP), 155–187 (QGHS…TDLH), 246–353 (HISS…PSVL), 398–439 (SGTG…IGGG), 473–503 (QTQN…LSSP), 821–1076 (QNGR…QNPL), 1250–1279 (KGMS…SEVI), and 1310–1331 (SETM…QVSS). Polar residues predominate over residues 8–18 (SNHGKQVTSGA). Low complexity predominate over residues 19 to 34 (QSQLPNVNQAQQQAPA). Basic and acidic residues predominate over residues 81-93 (ERSVSIDTGDQRE). A compositionally biased stretch (low complexity) spans 156–165 (GHSGSSTTGH). Gly residues predominate over residues 170–180 (GGPGLGSGHGP). 2 stretches are compositionally biased toward polar residues: residues 247–264 (ISSS…QSGT) and 278–287 (GTSTPSSTGH). 2 stretches are compositionally biased toward low complexity: residues 409–426 (GPNG…NSND) and 485–503 (SLMG…LSSP). 3 stretches are compositionally biased toward polar residues: residues 875–891 (LSST…TGSR), 920–930 (QLKSPSLSQEP), and 944–953 (SPSQLPQSGP). Low complexity-rich tracts occupy residues 960–971 (AASGAGTPSSTS), 979–994 (GPSL…PGHL), and 1031–1060 (SSST…INPS). Residues 1258–1268 (PHQPDSFPPMP) are compositionally biased toward pro residues.

Belongs to the BCL9 family.

It is found in the nucleus. In terms of biological role, transcriptional regulator that may act as an activator. Plays a role for mesoderm patterning in early embryogenesis. The chain is B-cell CLL/lymphoma 9-like protein (bcl9l) from Danio rerio (Zebrafish).